Reading from the N-terminus, the 496-residue chain is Aldehyde dehydrogenase 1A1 (496 aa).

Residues Lys86 and Lys123 each carry the N6-acetyllysine modification. NAD(+)-binding positions include 162–165, 188–191, 221–222, and 241–242; these read IPWN, KPAE, GP, and GS. Lys247 is subject to N6-acetyllysine. Glu264 acts as the Proton acceptor in catalysis. 264–266 provides a ligand contact to NAD(+); it reads ELG. Cys298 acts as the Nucleophile in catalysis. A mediates interaction with PRMT3 region spans residues 331 to 496; it reads LAPEVNQGPQ…VTVKISQKNS (166 aa). 344–348 lines the NAD(+) pocket; it reads EQYNK. An N6-acetyllysine mark is found at Lys348 and Lys362. 395-397 serves as a coordination point for NAD(+); that stretch reads EIF. Residue Lys405 is modified to N6-acetyllysine. Residue Ser408 is modified to Phosphoserine. N6-acetyllysine occurs at positions 414, 430, and 490.

It belongs to the aldehyde dehydrogenase family. Homotetramer. Interacts with PRMT3; the interaction is direct, inhibits ALDH1A1 aldehyde dehydrogenase activity and is independent of the methyltransferase activity of PRMT3. The N-terminus is blocked most probably by acetylation.

It is found in the cytoplasm. The protein resides in the cytosol. It localises to the cell projection. Its subcellular location is the axon. The enzyme catalyses an aldehyde + NAD(+) + H2O = a carboxylate + NADH + 2 H(+). It catalyses the reaction all-trans-retinal + NAD(+) + H2O = all-trans-retinoate + NADH + 2 H(+). The catalysed reaction is 9-cis-retinal + NAD(+) + H2O = 9-cis-retinoate + NADH + 2 H(+). It carries out the reaction 11-cis-retinal + NAD(+) + H2O = 11-cis-retinoate + NADH + 2 H(+). The enzyme catalyses 13-cis-retinal + NAD(+) + H2O = 13-cis-retinoate + NADH + 2 H(+). It catalyses the reaction (E)-4-hydroxynon-2-enal + NAD(+) + H2O = (E)-4-hydroxynon-2-enoate + NADH + 2 H(+). The catalysed reaction is malonaldehyde + NAD(+) + H2O = 3-oxopropanoate + NADH + 2 H(+). It carries out the reaction hexanal + NAD(+) + H2O = hexanoate + NADH + 2 H(+). The enzyme catalyses propanal + NAD(+) + H2O = propanoate + NADH + 2 H(+). It catalyses the reaction 3-deoxyglucosone + NAD(+) + H2O = 2-dehydro-3-deoxy-D-gluconate + NADH + 2 H(+). The catalysed reaction is acetaldehyde + NAD(+) + H2O = acetate + NADH + 2 H(+). It carries out the reaction benzaldehyde + NAD(+) + H2O = benzoate + NADH + 2 H(+). The enzyme catalyses 4-aminobutanal + NAD(+) + H2O = 4-aminobutanoate + NADH + 2 H(+). It participates in cofactor metabolism; retinol metabolism. In terms of biological role, cytosolic dehydrogenase that catalyzes the irreversible oxidation of a wide range of aldehydes to their corresponding carboxylic acid. Functions downstream of retinol dehydrogenases and catalyzes the oxidation of retinaldehyde into retinoic acid, the second step in the oxidation of retinol/vitamin A into retinoic acid. This pathway is crucial to control the levels of retinol and retinoic acid, two important molecules which excess can be teratogenic and cytotoxic. Also oxidizes aldehydes resulting from lipid peroxidation like (E)-4-hydroxynon-2-enal/HNE, malonaldehyde and hexanal that form protein adducts and are highly cytotoxic. By participating for instance to the clearance of (E)-4-hydroxynon-2-enal/HNE in the lens epithelium prevents the formation of HNE-protein adducts and lens opacification. Functions also downstream of fructosamine-3-kinase in the fructosamine degradation pathway by catalyzing the oxidation of 3-deoxyglucosone, the carbohydrate product of fructosamine 3-phosphate decomposition, which is itself a potent glycating agent that may react with lysine and arginine side-chains of proteins. Also has an aminobutyraldehyde dehydrogenase activity and is probably part of an alternative pathway for the biosynthesis of GABA/4-aminobutanoate in midbrain, thereby playing a role in GABAergic synaptic transmission. This Oryctolagus cuniculus (Rabbit) protein is Aldehyde dehydrogenase 1A1.